Reading from the N-terminus, the 126-residue chain is UPF0325 protein VFMJ11_2099 (126 aa).

The protein belongs to the UPF0325 family.

In Aliivibrio fischeri (strain MJ11) (Vibrio fischeri), this protein is UPF0325 protein VFMJ11_2099.